A 75-amino-acid polypeptide reads, in one-letter code: Large ribosomal subunit protein bL31c (75 aa).

It belongs to the bacterial ribosomal protein bL31 family. Type A subfamily. As to quaternary structure, part of the 50S ribosomal subunit.

Its subcellular location is the plastid. The protein resides in the chloroplast. Functionally, binds the 23S rRNA. This Cyanidium caldarium (Red alga) protein is Large ribosomal subunit protein bL31c.